A 373-amino-acid polypeptide reads, in one-letter code: Peptide chain release factor 1-like, mitochondrial (373 aa).

A mitochondrion-targeting transit peptide spans M1–W13. A coiled-coil region spans residues Q56–L111. Residues P229 to L293 form a GGQ domain region. The GGQ signature appears at G243–Q245. At Q245 the chain carries N5-methylglutamine.

The protein belongs to the prokaryotic/mitochondrial release factor family. Post-translationally, methylation of glutamine in the GGQ triplet by HEMK1 is conserved from bacteria to mammals.

Its subcellular location is the mitochondrion. Functionally, mitochondrial peptide chain release factor that directs the termination of translation in response to the peptide chain termination codons UAA and UAG. The protein is Peptide chain release factor 1-like, mitochondrial (Mtrf1l) of Rattus norvegicus (Rat).